A 156-amino-acid polypeptide reads, in one-letter code: Endogenous retrovirus group K member 7 Pro protein (156 aa).

Residues 21-96 form the Peptidase A2 domain; sequence FEGLVDTGAD…IPLNLWGRDL (76 aa). Residue aspartate 26 is part of the active site. The G-patch domain occupies 111-156; the sequence is YSPTSQKIMTKMGYIPGKGLGKNEDGIKVPVEAKINQEREGIGYPF.

Belongs to the peptidase A2 family. HERV class-II K(HML-2) subfamily. Active as a homodimer. Post-translationally, autoproteolytically processed at the N-terminus. Expected C-terminal autoprocessing not detected. The sequence shown is that of the processed Pro protein.

It catalyses the reaction Processing at the authentic HIV-1 PR recognition site and release of the mature p17 matrix and the p24 capsid protein, as a result of the cleavage of the -SQNY-|-PIVQ- cleavage site.. In terms of biological role, retroviral proteases have roles in processing of the primary translation products and the maturation of the viral particle. Endogenous Pro proteins may have kept, lost or modified their original function during evolution. This endogenous protein has retained most of the characteristics of retroviral proteases. The chain is Endogenous retrovirus group K member 7 Pro protein (ERVK-7) from Homo sapiens (Human).